A 244-amino-acid chain; its full sequence is Nicotinamidase 1 (244 aa).

This sequence belongs to the isochorismatase family. Expressed in roots and stems, and at lower levels in flowers, siliques and leaves.

The catalysed reaction is nicotinamide + H2O = nicotinate + NH4(+). The protein operates within cofactor biosynthesis; nicotinate biosynthesis; nicotinate from nicotinamide: step 1/1. Functionally, catalyzes the deamidation of nicotinamide, an early step in the NAD(+) salvage pathway. Prevents the accumulation of intracellular nicotinamide, a known inhibitor of poly(ADP-ribose) polymerases (PARP enzymes). In Arabidopsis thaliana (Mouse-ear cress), this protein is Nicotinamidase 1.